Consider the following 513-residue polypeptide: GMP synthase [glutamine-hydrolyzing] (513 aa).

In terms of domain architecture, Glutamine amidotransferase type-1 spans 5-195; it reads LVLVIDFGGQ…VYNICGCTGD (191 aa). Catalysis depends on C82, which acts as the Nucleophile. Residues H169 and E171 contribute to the active site. The GMPS ATP-PPase domain maps to 196–388; that stretch reads WKMDSFVEKT…LGIPEKLVFR (193 aa). 223-229 is a binding site for ATP; it reads SGGVDSS.

As to quaternary structure, homodimer.

The enzyme catalyses XMP + L-glutamine + ATP + H2O = GMP + L-glutamate + AMP + diphosphate + 2 H(+). It participates in purine metabolism; GMP biosynthesis; GMP from XMP (L-Gln route): step 1/1. In terms of biological role, catalyzes the synthesis of GMP from XMP. In Clostridium botulinum (strain Alaska E43 / Type E3), this protein is GMP synthase [glutamine-hydrolyzing].